The following is a 761-amino-acid chain: Probable ATP-dependent RNA helicase DDX20 (761 aa).

Positions 26 to 54 (VEFSSLLLSKPVLEGLSASGFQRPSPIQL) match the Q motif motif. Residues Arg-48, Gln-53, 70–77 (AKSGTGKT), and 73–78 (GTGKTC) each bind ATP. Residues 57 to 231 (IPLGRCGLDL…SRYMREPTFV (175 aa)) enclose the Helicase ATP-binding domain. The short motif at 175-178 (DEAD) is the DEAD box element. Residues 266–415 (SLLELFSKIP…PIPPGIMEEA (150 aa)) form the Helicase C-terminal domain. 2 disordered regions span residues 428–525 (PKIP…KSHT) and 570–720 (HDAH…EAGQ). Over residues 443 to 456 (KSEQMKSKPSRESH) the composition is skewed to basic and acidic residues. Residues 498–512 (QHDSTITQKQQNNTL) are compositionally biased toward polar residues. Composition is skewed to low complexity over residues 600 to 613 (SELS…SESS) and 623 to 635 (ESSS…STLE). Positions 655–679 (TLPSTRVPQQATRSKQKPCQPQSQD) are enriched in polar residues. The segment covering 683–707 (HHNLPHKHRTASKSSRRPTGPKRRT) has biased composition (basic residues).

This sequence belongs to the DEAD box helicase family. DDX20 subfamily. In terms of assembly, part of the core SMN complex.

The protein resides in the cytoplasm. It is found in the nucleus. It catalyses the reaction ATP + H2O = ADP + phosphate + H(+). It carries out the reaction a ribonucleoside 5'-triphosphate + H2O = a ribonucleoside 5'-diphosphate + phosphate + H(+). Its function is as follows. The SMN complex catalyzes the assembly of small nuclear ribonucleoproteins (snRNPs), the building blocks of the spliceosome, and thereby plays an important role in the splicing of cellular pre-mRNAs. Most spliceosomal snRNPs contain a common set of Sm proteins SNRPB, SNRPD1, SNRPD2, SNRPD3, SNRPE, SNRPF and SNRPG that assemble in a heptameric protein ring on the Sm site of the small nuclear RNA to form the core snRNP (Sm core). In the cytosol, the Sm proteins SNRPD1, SNRPD2, SNRPE, SNRPF and SNRPG are trapped in an inactive 6S pICln-Sm complex by the chaperone CLNS1A that controls the assembly of the core snRNP. To assemble core snRNPs, the SMN complex accepts the trapped 5Sm proteins from CLNS1A forming an intermediate. Binding of snRNA inside 5Sm triggers eviction of the SMN complex, thereby allowing binding of SNRPD3 and SNRPB to complete assembly of the core snRNP. May also play a role in the metabolism of small nucleolar ribonucleoprotein (snoRNPs). This chain is Probable ATP-dependent RNA helicase DDX20 (ddx20), found in Danio rerio (Zebrafish).